A 432-amino-acid polypeptide reads, in one-letter code: MNLLQSCKDMAMMMRIDSVSHITNTALLPCLYNGTVLRRRSLSLRKCGFRERKFQLRCVSASSDSLQFDFSPPPIDHDFLDTISVSGGKVSEDGVVESFDNDDEALDAFDNGVVVVDLSHFGRIRVSGDDRAHFLHNQTTANFESLYEGQGCDTVFVTPTARTIDIAHAWIMKNAILLTVSPTTCQSIIEMLNKYIFFADKVEIKDITKQTCLFALAGPKSNQIMSKLNLGDLIGQPYGRHQHYSFDGMPITVGVGSLISDEGFTMLMSPGGAVSVWKTLLAEGAIPMGSVAWEKLRITQGRPAPERELSKEFNVLEAGLWNSISLNKGCYKGQETIARLMTYDGIKQRLCGLNLSAPSEPGSTITVDGKKVGKLTSYTGGKNGSGHFGLGYIKKQAASIGNTVTVGEDISGIVSEVPYLARQHPPSANSSS.

The N-terminal 57 residues, 1–57, are a transit peptide targeting the chloroplast; sequence MNLLQSCKDMAMMMRIDSVSHITNTALLPCLYNGTVLRRRSLSLRKCGFRERKFQLR.

Belongs to the GcvT family. In terms of tissue distribution, expressed in young leaves (at protein level).

It is found in the plastid. The protein localises to the chloroplast. Its function is as follows. Folate-dependent protein involved in Fe/S cluster biogenesis. Functionally complements an E.coli mutant defective in ygfZ. The sequence is that of Putative transferase At1g60990, chloroplastic from Arabidopsis thaliana (Mouse-ear cress).